The sequence spans 183 residues: Transcription factor E (183 aa).

Residues 4–97 (YIELVRRYVY…SWSIKDEDIR (94 aa)) enclose the HTH TFE/IIEalpha-type domain.

The protein belongs to the TFE family. In terms of assembly, monomer. Interaction with RNA polymerase subunits RpoF and RpoE is necessary for Tfe stimulatory transcription activity. Able to interact with Tbp and RNA polymerase in the absence of DNA promoter. Interacts both with the preinitiation and elongation complexes.

Its function is as follows. Transcription factor that plays a role in the activation of archaeal genes transcribed by RNA polymerase. Facilitates transcription initiation by enhancing TATA-box recognition by TATA-box-binding protein (Tbp), and transcription factor B (Tfb) and RNA polymerase recruitment. Not absolutely required for transcription in vitro, but particularly important in cases where Tbp or Tfb function is not optimal. It dynamically alters the nucleic acid-binding properties of RNA polymerases by stabilizing the initiation complex and destabilizing elongation complexes. Seems to translocate with the RNA polymerase following initiation and acts by binding to the non template strand of the transcription bubble in elongation complexes. The chain is Transcription factor E from Caldivirga maquilingensis (strain ATCC 700844 / DSM 13496 / JCM 10307 / IC-167).